The primary structure comprises 560 residues: Zinc finger protein 250 (560 aa).

Residues 22 to 93 enclose the KRAB domain; the sequence is LTFEDVAVLL…DRKGAKKSQG (72 aa). Residues Lys125, Lys136, Lys148, and Lys162 each participate in a glycyl lysine isopeptide (Lys-Gly) (interchain with G-Cter in SUMO2) cross-link. The C2H2-type 1 zinc-finger motif lies at 199–221; that stretch reads YMCVECGKCFGRSSHLLQHQRIH. Lys225 is covalently cross-linked (Glycyl lysine isopeptide (Lys-Gly) (interchain with G-Cter in SUMO2)). 7 C2H2-type zinc fingers span residues 227 to 249, 255 to 277, 283 to 305, 311 to 333, 339 to 361, 367 to 389, and 395 to 417; these read YVCS…RRIH, YECN…HKIH, HECL…QRIH, YVCP…QRVH, HRCN…QRIH, YTCS…HNVH, and YECS…ERIH. A Glycyl lysine isopeptide (Lys-Gly) (interchain with G-Cter in SUMO2) cross-link involves residue Lys421. 5 C2H2-type zinc fingers span residues 423–445, 451–473, 479–501, 507–529, and 535–557; these read YACY…QRVH, YVCG…ERIH, FQCT…LRTH, YECN…QRIH, and YECG…QKVH.

The protein belongs to the krueppel C2H2-type zinc-finger protein family.

It is found in the nucleus. In terms of biological role, may be involved in transcriptional regulation. The chain is Zinc finger protein 250 (ZNF250) from Homo sapiens (Human).